A 210-amino-acid chain; its full sequence is Shikimate kinase (210 aa).

34 to 39 is a binding site for ATP; the sequence is GAGKSV. Position 38 (serine 38) interacts with Mg(2+). 3 residues coordinate substrate: aspartate 56, arginine 80, and glycine 102. Position 140 (arginine 140) interacts with ATP. Position 159 (arginine 159) interacts with substrate.

It belongs to the shikimate kinase family. As to quaternary structure, monomer. Requires Mg(2+) as cofactor.

Its subcellular location is the cytoplasm. The enzyme catalyses shikimate + ATP = 3-phosphoshikimate + ADP + H(+). It functions in the pathway metabolic intermediate biosynthesis; chorismate biosynthesis; chorismate from D-erythrose 4-phosphate and phosphoenolpyruvate: step 5/7. Its function is as follows. Catalyzes the specific phosphorylation of the 3-hydroxyl group of shikimic acid using ATP as a cosubstrate. This chain is Shikimate kinase, found in Bartonella quintana (strain Toulouse) (Rochalimaea quintana).